The chain runs to 431 residues: DNA polymerase delta subunit 2 (431 aa).

It belongs to the DNA polymerase delta/II small subunit family. As to quaternary structure, component of both the DNA polymerase delta and DNA polymerase zeta complexes. The DNA polymerase delta complex consisting of three subunits: the catalytic subunit PolD1 and two accessory subunits PolD2/Pol31 and PolD3/Pol32. Within the delta complex, interacts with both PolD1 and PolD3, and is able to interact with PolD1 in the absence of PolD3. Component of the DNA polymerase zeta complex consisting of four subunits: the catalytic subunit PolZ1 and three accessory subunits PolZ2/Rev7, PolD2/Pol31 and PolD3/Pol32. As to expression, expressed in ovaries and embryos (at the protein level).

It is found in the nucleus. Its subcellular location is the nucleoplasm. Accessory component of both the DNA polymerase delta complex and possibly the DNA polymerase zeta complex. As a component of the delta complex, participates in high fidelity genome replication, including lagging strand synthesis, DNA recombination and repair. Appears to promote the function of the DNA pol-delta complex accessory subunit PolD3 in both embryonic and postembryonic somatic cells. In Drosophila melanogaster (Fruit fly), this protein is DNA polymerase delta subunit 2.